We begin with the raw amino-acid sequence, 308 residues long: 4-hydroxy-3-methylbut-2-enyl diphosphate reductase (308 aa).

Cys13 serves as a coordination point for [4Fe-4S] cluster. Positions 42 and 75 each coordinate (2E)-4-hydroxy-3-methylbut-2-enyl diphosphate. Residues His42 and His75 each contribute to the dimethylallyl diphosphate site. Residues His42 and His75 each contribute to the isopentenyl diphosphate site. Cys97 is a binding site for [4Fe-4S] cluster. His125 lines the (2E)-4-hydroxy-3-methylbut-2-enyl diphosphate pocket. His125 serves as a coordination point for dimethylallyl diphosphate. His125 is an isopentenyl diphosphate binding site. The active-site Proton donor is Glu127. Thr165 lines the (2E)-4-hydroxy-3-methylbut-2-enyl diphosphate pocket. Cys195 is a binding site for [4Fe-4S] cluster. Positions 223, 224, 225, and 267 each coordinate (2E)-4-hydroxy-3-methylbut-2-enyl diphosphate. The dimethylallyl diphosphate site is built by Ser223, Ser224, Asn225, and Ser267. Positions 223, 224, 225, and 267 each coordinate isopentenyl diphosphate.

The protein belongs to the IspH family. [4Fe-4S] cluster serves as cofactor.

It carries out the reaction isopentenyl diphosphate + 2 oxidized [2Fe-2S]-[ferredoxin] + H2O = (2E)-4-hydroxy-3-methylbut-2-enyl diphosphate + 2 reduced [2Fe-2S]-[ferredoxin] + 2 H(+). It catalyses the reaction dimethylallyl diphosphate + 2 oxidized [2Fe-2S]-[ferredoxin] + H2O = (2E)-4-hydroxy-3-methylbut-2-enyl diphosphate + 2 reduced [2Fe-2S]-[ferredoxin] + 2 H(+). It functions in the pathway isoprenoid biosynthesis; dimethylallyl diphosphate biosynthesis; dimethylallyl diphosphate from (2E)-4-hydroxy-3-methylbutenyl diphosphate: step 1/1. The protein operates within isoprenoid biosynthesis; isopentenyl diphosphate biosynthesis via DXP pathway; isopentenyl diphosphate from 1-deoxy-D-xylulose 5-phosphate: step 6/6. Its function is as follows. Catalyzes the conversion of 1-hydroxy-2-methyl-2-(E)-butenyl 4-diphosphate (HMBPP) into a mixture of isopentenyl diphosphate (IPP) and dimethylallyl diphosphate (DMAPP). Acts in the terminal step of the DOXP/MEP pathway for isoprenoid precursor biosynthesis. The protein is 4-hydroxy-3-methylbut-2-enyl diphosphate reductase of Chlamydia muridarum (strain MoPn / Nigg).